The primary structure comprises 615 residues: Chaperone protein DnaK (615 aa).

Residue Thr-195 is modified to Phosphothreonine; by autocatalysis. Positions 592–615 (EKGAQAASGKGPDDVIDADYKPAD) are disordered.

It belongs to the heat shock protein 70 family.

Functionally, acts as a chaperone. This is Chaperone protein DnaK from Thermus thermophilus (strain ATCC BAA-163 / DSM 7039 / HB27).